The following is a 186-amino-acid chain: Ribosome-recycling factor (186 aa).

This sequence belongs to the RRF family.

Its subcellular location is the cytoplasm. Functionally, responsible for the release of ribosomes from messenger RNA at the termination of protein biosynthesis. May increase the efficiency of translation by recycling ribosomes from one round of translation to another. In Chlorobium luteolum (strain DSM 273 / BCRC 81028 / 2530) (Pelodictyon luteolum), this protein is Ribosome-recycling factor.